Here is a 338-residue protein sequence, read N- to C-terminus: Lipoate-protein ligase A (338 aa).

The 188-residue stretch at 29–216 (PATQRVLFLW…AFFAHYGERV (188 aa)) folds into the BPL/LPL catalytic domain. ATP-binding positions include arginine 71, 76 to 79 (GAVF), and lysine 134. Lysine 134 contributes to the (R)-lipoate binding site.

The protein belongs to the LplA family. As to quaternary structure, monomer.

The protein resides in the cytoplasm. It catalyses the reaction L-lysyl-[lipoyl-carrier protein] + (R)-lipoate + ATP = N(6)-[(R)-lipoyl]-L-lysyl-[lipoyl-carrier protein] + AMP + diphosphate + H(+). It participates in protein modification; protein lipoylation via exogenous pathway; protein N(6)-(lipoyl)lysine from lipoate: step 1/2. Its pathway is protein modification; protein lipoylation via exogenous pathway; protein N(6)-(lipoyl)lysine from lipoate: step 2/2. Its function is as follows. Catalyzes both the ATP-dependent activation of exogenously supplied lipoate to lipoyl-AMP and the transfer of the activated lipoyl onto the lipoyl domains of lipoate-dependent enzymes. This Escherichia coli (strain 55989 / EAEC) protein is Lipoate-protein ligase A.